The chain runs to 483 residues: Cysteine proteinase 1, mitochondrial (483 aa).

The N-terminal 30 residues, Met-1–Met-30, are a transit peptide targeting the mitochondrion. Catalysis depends on residues Cys-102, His-398, and Asn-421. Position 483 (Lys-483) is a propeptide, removed in mature form; by autocatalysis.

It belongs to the peptidase C1 family. Homohexamer. Binds to nucleic acids. Binds single-stranded DNA and RNA with higher affinity than double-stranded DNA. Post-translationally, the N-terminus of isoform Cytoplasmic is blocked.

It localises to the mitochondrion. Its subcellular location is the cytoplasm. It catalyses the reaction Inactivates bleomycin B2 (a cytotoxic glycometallopeptide) by hydrolysis of a carboxyamide bond of beta-aminoalanine, but also shows general aminopeptidase activity. The specificity varies somewhat with source, but amino acid arylamides of Met, Leu and Ala are preferred.. Its activity is regulated as follows. Inhibited by E64, a specific inhibitor of cysteine proteases, N-ethylmaleimide, iodacetamide, and mercury and zinc ions. Functionally, the normal physiological role of the enzyme is unknown, but it is not essential for the viability of yeast cells. Has aminopeptidase activity, shortening substrate peptides sequentially by 1 amino acid. Has bleomycin hydrolase activity, which can protect the cell from the toxic effects of bleomycin. Has homocysteine-thiolactonase activity, protecting the cell against homocysteine toxicity. Acts as a repressor in the GAL4 regulatory system, but this does not require either the peptidase or nucleic acid-binding activities. This is Cysteine proteinase 1, mitochondrial (LAP3) from Saccharomyces cerevisiae (strain YJM789) (Baker's yeast).